The following is a 327-amino-acid chain: DNA-directed RNA polymerase subunit alpha (327 aa).

The alpha N-terminal domain (alpha-NTD) stretch occupies residues 1 to 242 (MRKFLKYQLD…AHLEPIVNID (242 aa)). The tract at residues 259–327 (KRQNASISID…TERSLELKKD (69 aa)) is alpha C-terminal domain (alpha-CTD).

Belongs to the RNA polymerase alpha chain family. In terms of assembly, homodimer. The RNAP catalytic core consists of 2 alpha, 1 beta, 1 beta' and 1 omega subunit. When a sigma factor is associated with the core the holoenzyme is formed, which can initiate transcription.

It catalyses the reaction RNA(n) + a ribonucleoside 5'-triphosphate = RNA(n+1) + diphosphate. Its function is as follows. DNA-dependent RNA polymerase catalyzes the transcription of DNA into RNA using the four ribonucleoside triphosphates as substrates. The sequence is that of DNA-directed RNA polymerase subunit alpha from Ureaplasma parvum serovar 3 (strain ATCC 700970).